A 241-amino-acid polypeptide reads, in one-letter code: Uridylate kinase (241 aa).

15–18 (KLSG) contacts ATP. The involved in allosteric activation by GTP stretch occupies residues 23–28 (GAEGFG). Gly57 serves as a coordination point for UMP. ATP-binding residues include Gly58 and Arg62. UMP contacts are provided by residues Asp77 and 138–145 (TGNPFFTT). Residues Thr165, Phe171, and Asp174 each contribute to the ATP site.

Belongs to the UMP kinase family. Homohexamer.

The protein resides in the cytoplasm. It catalyses the reaction UMP + ATP = UDP + ADP. Its pathway is pyrimidine metabolism; CTP biosynthesis via de novo pathway; UDP from UMP (UMPK route): step 1/1. Its activity is regulated as follows. Allosterically activated by GTP. Inhibited by UTP. Functionally, catalyzes the reversible phosphorylation of UMP to UDP. The sequence is that of Uridylate kinase from Sodalis glossinidius (strain morsitans).